Consider the following 62-residue polypeptide: Ubiquinol-cytochrome c reductase complex 6.7 kDa protein (62 aa).

The Mitochondrial matrix segment spans residues 2–25 (TSPAAAGNGLFKFLRPKLRPQSTD). A helical transmembrane segment spans residues 26–44 (IQAAAGWGVAAVTGALWVI). Topologically, residues 45–62 (QPWDFLRKTFIEKQEEEK) are mitochondrial intermembrane.

Belongs to the UQCR11/QCR10 family. In terms of assembly, component of the ubiquinol-cytochrome c oxidoreductase (cytochrome b-c1 complex, complex III, CIII), a multisubunit enzyme composed of 3 respiratory subunits cytochrome b, cytochrome c1 and Rieske protein, 2 core protein subunits, and additional low-molecular weight protein subunits. The complex exists as an obligatory dimer and forms supercomplexes (SCs) in the inner mitochondrial membrane with cytochrome c oxidase (complex IV, CIV).

It localises to the mitochondrion inner membrane. Component of the ubiquinol-cytochrome c oxidoreductase, a multisubunit transmembrane complex that is part of the mitochondrial electron transport chain which drives oxidative phosphorylation. The respiratory chain contains 3 multisubunit complexes succinate dehydrogenase (complex II, CII), ubiquinol-cytochrome c oxidoreductase (cytochrome b-c1 complex, complex III, CIII) and cytochrome c oxidase (complex IV, CIV), that cooperate to transfer electrons derived from NADH and succinate to molecular oxygen, creating an electrochemical gradient over the inner membrane that drives transmembrane transport and the ATP synthase. The cytochrome b-c1 complex catalyzes electron transfer from ubiquinol to cytochrome c, linking this redox reaction to translocation of protons across the mitochondrial inner membrane, with protons being carried across the membrane as hydrogens on the quinol. In the process called Q cycle, 2 protons are consumed from the matrix, 4 protons are released into the intermembrane space and 2 electrons are passed to cytochrome c. QCR10 has a role in CIII assembly and RIP1 stability. In Solanum tuberosum (Potato), this protein is Ubiquinol-cytochrome c reductase complex 6.7 kDa protein.